The following is a 1542-amino-acid chain: Pleiotropic ABC efflux transporter of multiple drugs PDH1 (1542 aa).

Low complexity predominate over residues 1–14 (MNTPDDSSVSSVDS). Positions 1–61 (MNTPDDSSVS…APADGSAPLD (61 aa)) are disordered. The Cytoplasmic portion of the chain corresponds to 1–517 (MNTPDDSSVS…LIRNFWRIKN (517 aa)). The segment covering 24–33 (NVEKRIRELA) has biased composition (basic and acidic residues). The segment covering 35 to 47 (SLTQQSLTSSNRS) has biased composition (polar residues). The region spanning 153-409 (VKLLNAVWRK…FQKMGYFCPK (257 aa)) is the ABC transporter 1 domain. 6 helical membrane-spanning segments follow: residues 518 to 540 (SASV…GSMF), 552 to 574 (FYFR…LLEI), 603 to 625 (VISE…YFLV), 634 to 652 (FFFY…SHLF), 662 to 684 (LQEA…GFAI), and 773 to 792 (GFGV…LILC). Residues 793–1220 (EFNEGAKQKG…LFQQYWRTPD (428 aa)) lie on the Cytoplasmic side of the membrane. The span at 825 to 834 (TKMHTDKNDI) shows a compositional bias: basic and acidic residues. The disordered stretch occupies residues 825 to 846 (TKMHTDKNDIENNSESITSNAT). Over residues 835 to 846 (ENNSESITSNAT) the composition is skewed to polar residues. In terms of domain architecture, ABC transporter 2 spans 885–1128 (FHWQNLCYDV…MIKYFEDHGA (244 aa)). Position 921-928 (921-928 (GASGAGKT)) interacts with ATP. The next 6 helical transmembrane spans lie at 1221–1241 (YLWS…FTFF), 1256–1276 (SIFM…PTFV), 1296–1316 (AFIL…GTLA), 1342–1362 (LFWL…LFVI), 1370–1390 (TAAH…GVMA), and 1495–1515 (GIFI…YWLA). The Cytoplasmic segment spans residues 1516-1542 (RVPKTNGKIAKNGKTAKVNFIRRLIPF).

This sequence belongs to the ABC transporter superfamily. ABCG family. PDR (TC 3.A.1.205) subfamily. Phosphorylated by PKA. Dephosphorylated on glucose depletion and independently rephosphorylated during glucose exposure or under stress.

The protein localises to the cell membrane. Its function is as follows. Pleiotropic ABC efflux transporter that confers resistance to structurally and functionally unrelated compounds including caspofungin or azoles such as fluconazole, itraconazole, posaconazole, voriconazole, and isavuconazole. Does not play a role in the azole resistance in mature biofilms. The polypeptide is Pleiotropic ABC efflux transporter of multiple drugs PDH1 (Candida glabrata (strain ATCC 2001 / BCRC 20586 / JCM 3761 / NBRC 0622 / NRRL Y-65 / CBS 138) (Yeast)).